A 591-amino-acid polypeptide reads, in one-letter code: Metalloendopeptidase OPG085 (591 aa).

Position 41 (histidine 41) interacts with Zn(2+). Residue glutamate 44 is part of the active site. Histidine 45 contacts Zn(2+).

Belongs to the peptidase M44 family. The cofactor is Zn(2+). Post-translationally, undergoes proteolytic processing during the course of infection. May be cleaved into 46 kDa and 22 kDa products (Potential).

Its subcellular location is the virion. Probably involved in maturation of some viral proteins by processing them preferentially at Ala-Gly-|-Ser/Thr/Lys motifs. Does not seem to be responsible for the cleavage of major core proteins. This Homo sapiens (Human) protein is Metalloendopeptidase OPG085 (OPG085).